Reading from the N-terminus, the 94-residue chain is Small ribosomal subunit protein uS19c (94 aa).

The protein belongs to the universal ribosomal protein uS19 family.

Its subcellular location is the plastid. It localises to the chloroplast. Its function is as follows. Protein S19 forms a complex with S13 that binds strongly to the 16S ribosomal RNA. This chain is Small ribosomal subunit protein uS19c, found in Pleurastrum terricola (Filamentous green alga).